Here is a 150-residue protein sequence, read N- to C-terminus: C-type lectin 16 (150 aa).

The N-terminal stretch at 1–27 (MKRVRVKVIFVSFGLLVVFLSLSGTAA) is a signal peptide. 3 cysteine pairs are disulfide-bonded: cysteine 29–cysteine 40, cysteine 57–cysteine 146, and cysteine 123–cysteine 138. Residues 36-147 (YEGHCYKPFN…CRMLARFVCE (112 aa)) enclose the C-type lectin domain.

The protein belongs to the snaclec family. In terms of assembly, heteromultimer; disulfide-linked. As to expression, expressed by the venom gland.

The protein localises to the secreted. Interferes with one step of hemostasis (modulation of platelet aggregation, or coagulation cascade, for example). This Crotalus adamanteus (Eastern diamondback rattlesnake) protein is C-type lectin 16.